The sequence spans 127 residues: UPF0325 protein VV1_1856 (127 aa).

The protein belongs to the UPF0325 family.

The sequence is that of UPF0325 protein VV1_1856 from Vibrio vulnificus (strain CMCP6).